The following is a 93-amino-acid chain: Pyrimidine/purine nucleoside phosphorylase (93 aa).

This sequence belongs to the nucleoside phosphorylase PpnP family.

The catalysed reaction is a purine D-ribonucleoside + phosphate = a purine nucleobase + alpha-D-ribose 1-phosphate. It catalyses the reaction adenosine + phosphate = alpha-D-ribose 1-phosphate + adenine. It carries out the reaction cytidine + phosphate = cytosine + alpha-D-ribose 1-phosphate. The enzyme catalyses guanosine + phosphate = alpha-D-ribose 1-phosphate + guanine. The catalysed reaction is inosine + phosphate = alpha-D-ribose 1-phosphate + hypoxanthine. It catalyses the reaction thymidine + phosphate = 2-deoxy-alpha-D-ribose 1-phosphate + thymine. It carries out the reaction uridine + phosphate = alpha-D-ribose 1-phosphate + uracil. The enzyme catalyses xanthosine + phosphate = alpha-D-ribose 1-phosphate + xanthine. Its function is as follows. Catalyzes the phosphorolysis of diverse nucleosides, yielding D-ribose 1-phosphate and the respective free bases. Can use uridine, adenosine, guanosine, cytidine, thymidine, inosine and xanthosine as substrates. Also catalyzes the reverse reactions. The sequence is that of Pyrimidine/purine nucleoside phosphorylase from Pseudomonas savastanoi pv. phaseolicola (strain 1448A / Race 6) (Pseudomonas syringae pv. phaseolicola (strain 1448A / Race 6)).